The chain runs to 727 residues: Endothelin-converting enzyme homolog (727 aa).

The Cytoplasmic portion of the chain corresponds to 1–44; that stretch reads MSFNFSRYSGAYTTTFSFLLLALLIVSAVLLSRPYAPALLHAEE. A helical; Signal-anchor for type II membrane protein membrane pass occupies residues 45-65; the sequence is AYCVSMSCVTAAASVLSLMDA. Residues 46-727 form the Peptidase M13 domain; it reads YCVSMSCVTA…MNPVHKCEVW (682 aa). Cystine bridges form between Cys-47/Cys-52, Cys-70/Cys-712, Cys-78/Cys-672, Cys-134/Cys-392, and Cys-601/Cys-724. Topologically, residues 66–727 are extracellular; it reads TADPCSDFYQ…MNPVHKCEVW (662 aa). N-linked (GlcNAc...) asparagine glycosylation is found at Asn-138, Asn-160, Asn-164, Asn-169, Asn-222, Asn-309, Asn-337, Asn-340, and Asn-511. His-564 is a Zn(2+) binding site. Residue Glu-565 is part of the active site. His-568 is a Zn(2+) binding site. Residues Asn-589 and Asn-608 are each glycosylated (N-linked (GlcNAc...) asparagine). Residue Glu-624 participates in Zn(2+) binding. The active-site Proton donor is the Asp-628. N-linked (GlcNAc...) asparagine glycosylation occurs at Asn-656.

The protein belongs to the peptidase M13 family. Zn(2+) serves as cofactor. As to expression, highly expressed in brain and midgut, and to a lesser extent in fat body, ovaries, testes and haemocytes.

Its subcellular location is the cell membrane. This is Endothelin-converting enzyme homolog from Locusta migratoria (Migratory locust).